The chain runs to 82 residues: Small ribosomal subunit protein bS20 (82 aa).

The disordered stretch occupies residues 1–29 (MPNIKSAKKDLRRSRAAAVRNRAQRSALR). Low complexity predominate over residues 16-29 (AAAVRNRAQRSALR).

Belongs to the bacterial ribosomal protein bS20 family.

In terms of biological role, binds directly to 16S ribosomal RNA. The sequence is that of Small ribosomal subunit protein bS20 from Gemmatimonas aurantiaca (strain DSM 14586 / JCM 11422 / NBRC 100505 / T-27).